A 401-amino-acid chain; its full sequence is Probable plasmid-partitioning protein ParB (401 aa).

Residues 232–272 (KTRGKENARDKAAAVKEEVKPSKKPKADNGEKTPKGRSHEE) form a disordered region.

It belongs to the ParB family.

The chain is Probable plasmid-partitioning protein ParB from Xylella fastidiosa (strain 9a5c).